The chain runs to 281 residues: Acidic leucine-rich nuclear phosphoprotein 32-related protein (281 aa).

4 LRR repeats span residues 29-52, 56-78, 79-103, and 105-128; these read YESL…EKEL, FKNL…IPSI, ATLN…IVQN, and PNIK…TLKE. The LRRCT domain occupies 140–178; that stretch reads NPFADNPNYRKELFEFLPNVKIIDCYNKEGMEVLSSDEE. The segment covering 197-244 has biased composition (acidic residues); the sequence is FKDEDDEDEEFVPNDNEDDDEDDELDDDLEDEDMEDLDKEDLDKEDYD. Residues 197–281 form a disordered region; it reads FKDEDDEDEE…DMDLKKTKLE (85 aa). Residues 245 to 266 show a composition bias toward basic and acidic residues; it reads IDTKETEGVNKDEKSNKRKQDA.

It belongs to the ANP32 family.

The sequence is that of Acidic leucine-rich nuclear phosphoprotein 32-related protein from Plasmodium falciparum (isolate 3D7).